The sequence spans 159 residues: Mitotic-spindle organizing protein 2 (159 aa).

Residues 87 to 159 (LASDPQDSVP…SGKSNSRSSP (73 aa)) are disordered. The span at 91 to 105 (PQDSVPISLSTSTSE) shows a compositional bias: polar residues. Arg111 bears the Omega-N-methylarginine mark. The residue at position 153 (Ser153) is a Phosphoserine.

Belongs to the MOZART2 family. As to quaternary structure, associates with the gamma-tubulin ring complex (gTuRC) consisting of TUBGCP2, TUBGCP3, TUBGCP4, TUBGCP5 and TUBGCP6 and gamma-tubulin TUBG1 or TUBG2; within the complex, interacts with TUBGCP2; the interaction plays a role in gTuRC activation.

The protein resides in the cytoplasm. It is found in the cytoskeleton. It localises to the microtubule organizing center. The protein localises to the centrosome. Its subcellular location is the spindle. In terms of biological role, required for the recruitment and the assembly of the gamma-tubulin ring complex (gTuRC) at the centrosome. The gTuRC regulates the minus-end nucleation of alpha-beta tubulin heterodimers that grow into microtubule protafilaments, a critical step in centrosome duplication and spindle formation. This Mus musculus (Mouse) protein is Mitotic-spindle organizing protein 2 (Mzt2).